The primary structure comprises 291 residues: Acetyl-coenzyme A carboxylase carboxyl transferase subunit beta (291 aa).

One can recognise a CoA carboxyltransferase N-terminal domain in the interval 23–291 (VWHKCPSCTA…PPDLPVEESV (269 aa)). Zn(2+)-binding residues include Cys-27, Cys-30, Cys-46, and Cys-49. A C4-type zinc finger spans residues 27–49 (CPSCTAVLYRVELERNLEVCPKC).

Belongs to the AccD/PCCB family. As to quaternary structure, acetyl-CoA carboxylase is a heterohexamer composed of biotin carboxyl carrier protein (AccB), biotin carboxylase (AccC) and two subunits each of ACCase subunit alpha (AccA) and ACCase subunit beta (AccD). Requires Zn(2+) as cofactor.

It is found in the cytoplasm. It catalyses the reaction N(6)-carboxybiotinyl-L-lysyl-[protein] + acetyl-CoA = N(6)-biotinyl-L-lysyl-[protein] + malonyl-CoA. It functions in the pathway lipid metabolism; malonyl-CoA biosynthesis; malonyl-CoA from acetyl-CoA: step 1/1. Its function is as follows. Component of the acetyl coenzyme A carboxylase (ACC) complex. Biotin carboxylase (BC) catalyzes the carboxylation of biotin on its carrier protein (BCCP) and then the CO(2) group is transferred by the transcarboxylase to acetyl-CoA to form malonyl-CoA. This chain is Acetyl-coenzyme A carboxylase carboxyl transferase subunit beta, found in Coxiella burnetii (strain Dugway 5J108-111).